We begin with the raw amino-acid sequence, 430 residues long: uncharacterized protein (430 aa).

Positions 1–19 (MKILLFVVLFFNVLVGIYS) are cleaved as a signal peptide. Asparagine 39 carries N-linked (GlcNAc...) asparagine glycosylation. Positions 119 to 408 (LDPNSSPSPS…ELLEKNSDGN (290 aa)) are disordered. A compositionally biased stretch (pro residues) spans 124–168 (SPSPSPSPSPSPSPSPSPSPSPSPSPSPSPSPSPSPSPSPSPSPS). 2 stretches are compositionally biased toward low complexity: residues 169 to 253 (PSSS…TPSQ) and 263 to 285 (PTPT…TQTP). Residues 286-303 (ISSRPMSISTEKPSSSEE) are compositionally biased toward polar residues. Asparagine 312 carries N-linked (GlcNAc...) asparagine glycosylation. Basic and acidic residues predominate over residues 316–325 (SEDKKKDSES). Over residues 326–370 (KSSQSESPSPSASASESESASESASASTSVSVSASPLPIMDSSSS) the composition is skewed to low complexity. N-linked (GlcNAc...) asparagine glycosylation is present at asparagine 408.

Its subcellular location is the secreted. This is an uncharacterized protein from Dictyostelium discoideum (Social amoeba).